The chain runs to 207 residues: Ion-translocating oxidoreductase complex subunit B (207 aa).

The interval 1–29 is hydrophobic; the sequence is MLDLSIIAYLLIAICLIALIFGALLGYFS. The 4Fe-4S domain maps to 35 to 93; it reads EADPIVDQIDAILPQSQCGQCGYPGCKPYAEAIANGDQITKCVPGGQPLVVKIAELMGV. The [4Fe-4S] cluster site is built by cysteine 52, cysteine 55, cysteine 60, cysteine 76, cysteine 116, cysteine 119, cysteine 122, cysteine 126, cysteine 146, cysteine 149, cysteine 152, and cysteine 156. 4Fe-4S ferredoxin-type domains follow at residues 107-136 and 137-166; these read KVALIHEDMCIGCTKCIQACPVDAIIGTNK and AMHTVVADLCTGCELCVAPCPTNCIEMIKV.

The protein belongs to the 4Fe4S bacterial-type ferredoxin family. RnfB subfamily. As to quaternary structure, the complex is composed of six subunits: RnfA, RnfB, RnfC, RnfD, RnfE and RnfG. It depends on [4Fe-4S] cluster as a cofactor.

It is found in the cell inner membrane. Its function is as follows. Part of a membrane-bound complex that couples electron transfer with translocation of ions across the membrane. This is Ion-translocating oxidoreductase complex subunit B from Haemophilus ducreyi (strain 35000HP / ATCC 700724).